We begin with the raw amino-acid sequence, 428 residues long: Glutamyl-tRNA reductase (428 aa).

Residues 49-52, Ser-107, 112-114, and Gln-118 each bind substrate; these read TCNR and EPQ. Residue Cys-50 is the Nucleophile of the active site. 187-192 serves as a coordination point for NADP(+); the sequence is GAGETI.

It belongs to the glutamyl-tRNA reductase family. As to quaternary structure, homodimer.

The catalysed reaction is (S)-4-amino-5-oxopentanoate + tRNA(Glu) + NADP(+) = L-glutamyl-tRNA(Glu) + NADPH + H(+). It participates in porphyrin-containing compound metabolism; protoporphyrin-IX biosynthesis; 5-aminolevulinate from L-glutamyl-tRNA(Glu): step 1/2. In terms of biological role, catalyzes the NADPH-dependent reduction of glutamyl-tRNA(Glu) to glutamate 1-semialdehyde (GSA). In Pseudomonas fluorescens (strain Pf0-1), this protein is Glutamyl-tRNA reductase.